The following is a 420-amino-acid chain: Nucleobindin-2 (420 aa).

Residues 1–24 form the signal peptide; it reads MRWRIIQVQYCFLLVPCMLTALEA. A DNA-binding region spans residues 171 to 223; it reads RTRHEEFKKYEMMKEHERREYLKTLSEEKRKEEESKFEEMKRKHEDHPKVNHP. A disordered region spans residues 193-225; the sequence is KTLSEEKRKEEESKFEEMKRKHEDHPKVNHPGS. The tract at residues 213-420 is binds to necdin; it reads KHEDHPKVNH…AGELKFEPHT (208 aa). 2 EF-hand domains span residues 241 to 276 and 293 to 328; these read PNDF…ELEK and ERLR…KEFL. Residues Asp254, Asn256, Asp258, Glu265, Asp306, Asn308, Asp310, and Glu317 each coordinate Ca(2+). The GBA motif lies at 304-334; it reads EIDNNKDRLVTLEEFLRATEKKEFLEPDSWE. A Phosphoserine modification is found at Ser332. Residues 365-389 show a composition bias toward basic and acidic residues; that stretch reads AEELQKQKEDLQRQHDHLEAQKQEY. Residues 365–420 are disordered; sequence AEELQKQKEDLQRQHDHLEAQKQEYHQAVQHLEQKKLQQGIAPSGPAGELKFEPHT.

Belongs to the nucleobindin family. As to quaternary structure, interacts (via GBA motif) with guanine nucleotide-binding protein G(i) alpha subunit GNAI3. Preferentially interacts with inactive rather than active GNAI3. Interaction with GNAI3 is inhibited when NUCB2 binds calcium, probably due to a conformational change which renders the GBA motif inaccessible. Binds to the postmitotic growth suppressor NDN; coexpression abolishes NUCB2 secretion. Interacts with MC4R. In terms of tissue distribution, found in liver, heart, thymus, muscle, intestine, kidney, lung, spleen and throughout the brain, in cerebral cortex, hippocampus, hypothalamus and medulla oblongata. Nucb2 and necdin levels were higher in postmitotic neurons.

It is found in the cytoplasm. Its subcellular location is the perikaryon. The protein resides in the endoplasmic reticulum. It localises to the golgi apparatus. The protein localises to the nucleus envelope. It is found in the membrane. Its subcellular location is the secreted. Calcium-binding protein which may have a role in calcium homeostasis. Acts as a non-receptor guanine nucleotide exchange factor which binds to and activates guanine nucleotide-binding protein (G-protein) alpha subunit GNAI3. Its function is as follows. Anorexigenic peptide, seems to play an important role in hypothalamic pathways regulating food intake and energy homeostasis, acting in a leptin-independent manner. May also exert hypertensive roles and modulate blood pressure through directly acting on peripheral arterial resistance. In intestinal epithelial cells, plays a role in the inhibition of hepatic glucose production via MC4R receptor leading to increased cyclic adenosine monophosphate (cAMP) levels and glucagon-like peptide 1 (GLP-1) secretion. This Mus musculus (Mouse) protein is Nucleobindin-2 (Nucb2).